The primary structure comprises 227 residues: GRF-interacting factor 1 (227 aa).

A disordered region spans residues 186 to 227 (RSGSGAKEGSTSLSVDVRGGTSSGAQSGDGEYLKVGTEEEGS).

This sequence belongs to the SS18 family. As to quaternary structure, interacts with several GRFs. Interacts with GRF10. Interacts with GRF1. Expressed in shoots, aerial roots, ears and tassels. Expressed in the shoot apical meristem (SAM), young leaf primordia, leaf margins, inflorescence meristem, floral meristem and spikelet meristem.

Functionally, transcription coactivator that plays a role in the regulation of meristematic function in leaves, stems and inflorescences. Regulates shoot architecture and meristem determinacy. Binds to the inflorescence architecture gene UB3 (unbranched3). Regulates the expression of several genes involved in inflorescence architecture. Component of a network formed by the microRNA396 (miRNA396), the GRFs and their interacting factors (GIFs) acting in the regulation of meristem function, at least partially through the control of cell proliferation. Associates with the core SWI/SNF chromatin-remodeling complex and specific GRFs to tightly regulate the transition between cell division and cell expansion in growing leaves. The protein is GRF-interacting factor 1 of Zea mays (Maize).